Consider the following 156-residue polypeptide: Small ribosomal subunit protein uS7 (156 aa).

It belongs to the universal ribosomal protein uS7 family. As to quaternary structure, part of the 30S ribosomal subunit. Contacts proteins S9 and S11.

Functionally, one of the primary rRNA binding proteins, it binds directly to 16S rRNA where it nucleates assembly of the head domain of the 30S subunit. Is located at the subunit interface close to the decoding center, probably blocks exit of the E-site tRNA. This Thermomicrobium roseum (strain ATCC 27502 / DSM 5159 / P-2) protein is Small ribosomal subunit protein uS7.